Here is an 879-residue protein sequence, read N- to C-terminus: Alanine--tRNA ligase (879 aa).

Zn(2+) contacts are provided by His-570, His-574, Cys-672, and His-676.

This sequence belongs to the class-II aminoacyl-tRNA synthetase family. Requires Zn(2+) as cofactor.

It is found in the cytoplasm. The enzyme catalyses tRNA(Ala) + L-alanine + ATP = L-alanyl-tRNA(Ala) + AMP + diphosphate. Catalyzes the attachment of alanine to tRNA(Ala) in a two-step reaction: alanine is first activated by ATP to form Ala-AMP and then transferred to the acceptor end of tRNA(Ala). Also edits incorrectly charged Ser-tRNA(Ala) and Gly-tRNA(Ala) via its editing domain. The polypeptide is Alanine--tRNA ligase (Nitratidesulfovibrio vulgaris (strain ATCC 29579 / DSM 644 / CCUG 34227 / NCIMB 8303 / VKM B-1760 / Hildenborough) (Desulfovibrio vulgaris)).